A 60-amino-acid chain; its full sequence is Protein translocase subunit SecE (60 aa).

The Cytoplasmic segment spans residues 1–31 (MFARLIRYFQEARAELARVTWPTREQVVEGT). A helical membrane pass occupies residues 32–52 (QAILLFTLAFMVILGLYDTVF). Residues 53–60 (RFLIGLLR) lie on the Extracellular side of the membrane.

The protein belongs to the SecE/SEC61-gamma family. In terms of assembly, component of the Sec protein translocase complex. Heterotrimer consisting of SecY, SecE and SecG subunits. The heterotrimers can form oligomers, although 1 heterotrimer is thought to be able to translocate proteins. Interacts with SecDF, and other proteins may be involved. The channel interacts with SecA via subunit SecY.

Its subcellular location is the cell inner membrane. In terms of biological role, essential subunit of the protein translocation channel SecYEG. Clamps together the 2 halves of SecY. May contact the channel plug during translocation. The chain is Protein translocase subunit SecE from Thermus thermophilus (strain ATCC 27634 / DSM 579 / HB8).